The chain runs to 179 residues: Large ribosomal subunit protein uL5 (179 aa).

Belongs to the universal ribosomal protein uL5 family. As to quaternary structure, part of the 50S ribosomal subunit; part of the 5S rRNA/L5/L18/L25 subcomplex. Contacts the 5S rRNA and the P site tRNA. Forms a bridge to the 30S subunit in the 70S ribosome.

This is one of the proteins that bind and probably mediate the attachment of the 5S RNA into the large ribosomal subunit, where it forms part of the central protuberance. In the 70S ribosome it contacts protein S13 of the 30S subunit (bridge B1b), connecting the 2 subunits; this bridge is implicated in subunit movement. Contacts the P site tRNA; the 5S rRNA and some of its associated proteins might help stabilize positioning of ribosome-bound tRNAs. The sequence is that of Large ribosomal subunit protein uL5 from Prochlorococcus marinus (strain MIT 9215).